The sequence spans 345 residues: Phosphoribosylformylglycinamidine cyclo-ligase (345 aa).

The protein belongs to the AIR synthase family.

The protein localises to the cytoplasm. The catalysed reaction is 2-formamido-N(1)-(5-O-phospho-beta-D-ribosyl)acetamidine + ATP = 5-amino-1-(5-phospho-beta-D-ribosyl)imidazole + ADP + phosphate + H(+). It participates in purine metabolism; IMP biosynthesis via de novo pathway; 5-amino-1-(5-phospho-D-ribosyl)imidazole from N(2)-formyl-N(1)-(5-phospho-D-ribosyl)glycinamide: step 2/2. This Shewanella frigidimarina (strain NCIMB 400) protein is Phosphoribosylformylglycinamidine cyclo-ligase.